Reading from the N-terminus, the 900-residue chain is Periodic tryptophan protein 2 (900 aa).

WD repeat units follow at residues 10-47 (GAPY…SVTL), 50-89 (ETST…VLHR), 91-129 (TFKD…RAVL), 139-178 (NSDD…GVLN), and 185-229 (GHRD…VKMD). The disordered stretch occupies residues 228-284 (MDESEDGHSEPPSPVTPDRADEVMVENGGGVGTELKKRKEYDGKGLESDEEGDDDDE). The segment covering 261–274 (ELKKRKEYDGKGLE) has biased composition (basic and acidic residues). Residue Ser-275 is modified to Phosphoserine. Positions 275 to 284 (SDEEGDDDDE) are enriched in acidic residues. WD repeat units lie at residues 302-341 (QASA…CIHL), 344-384 (ISRQ…YILK), 387-426 (GHYF…CFIT), 429-468 (EHTN…NYKT), 472-512 (PTPR…IKDI), 515-554 (GHEA…GTVE), 557-596 (RHNH…LMYT), and 619-658 (SSGK…LLRR). Residues 684–720 (PIDLIDDDNSDEEGGIDKQSRGNLGYDLPGSRPNRGR) are disordered. Residues 687–697 (LIDDDNSDEEG) are compositionally biased toward acidic residues. The stretch at 720–759 (RPIIRTKSLSIAPTGRSFAAATTEGVLIFSIDDTFIFDPT) is one WD 14 repeat.

The protein belongs to the WD repeat PWP2 family. Component of the ribosomal small subunit (SSU) processome. Interacts with TBP1 in the nucleus. As to expression, expressed constitutively and ubiquitously; observed in seeds, seedlings, roots, leaves, stems, flowers and siliques.

The protein localises to the nucleus. It is found in the nucleolus. Its function is as follows. Involved in nucleolar processing of pre-18S ribosomal RNA. Plays a role early in ribosome biogenesis, especially in the maturation of 5.8S rRNA. Required for guard cell functions. The protein is Periodic tryptophan protein 2 of Arabidopsis thaliana (Mouse-ear cress).